Reading from the N-terminus, the 725-residue chain is Ophiobolin F synthase (725 aa).

Positions 1-322 (MEYKYSTIVD…RYHADAKFNE (322 aa)) are (7Z)-ophiobola-7,19-dien-3-ol synthase. Residues Asp93 and Asp97 each contribute to the Mg(2+) site. Asp93 lines the substrate pocket. A DDXXD 1 motif is present at residues 93–97 (DDEID). Residues 182 to 185 (RCMD), Asn226, 230 to 234 (SYEKE), and 313 to 314 (RY) each bind substrate. Residues 226–234 (NDLFSYEKE) carry the NSE/DTE motif. The geranylfarnesyl diphosphate synthase stretch occupies residues 323 to 725 (LQMLRAEHGV…LRMMLELLKV (403 aa)). The segment at 362-388 (GVNGVNGKRKRSGEETADDARTNGNGI) is disordered. The segment covering 373–382 (SGEETADDAR) has biased composition (basic and acidic residues). 3 residues coordinate isopentenyl diphosphate: Lys436, Arg439, and His468. Positions 475 and 479 each coordinate Mg(2+). Positions 475-479 (DDIED) match the DDXXD 2 motif. Residue Arg484 coordinates dimethylallyl diphosphate. An isopentenyl diphosphate-binding site is contributed by Arg485. Residues Lys562, Thr563, Gln601, Asn608, Lys618, and Lys628 each coordinate dimethylallyl diphosphate.

This sequence in the N-terminal section; belongs to the terpene synthase family. In the C-terminal section; belongs to the FPP/GGPP synthase family. It depends on Mg(2+) as a cofactor.

The catalysed reaction is isopentenyl diphosphate + (2E,6E)-farnesyl diphosphate = (2E,6E,10E)-geranylgeranyl diphosphate + diphosphate. The enzyme catalyses isopentenyl diphosphate + (2E,6E,10E)-geranylgeranyl diphosphate = (2E,6E,10E,14E)-geranylfarnesyl diphosphate + diphosphate. It catalyses the reaction (2E,6E,10E,14E)-geranylfarnesyl diphosphate + H2O = ophiobolin F + diphosphate. It participates in secondary metabolite biosynthesis; terpenoid biosynthesis. In terms of biological role, bifunctional sesterterpene synthase that converts isopentenyl diphosphate (IPP) and dimethylallyl diphosphate (DMAPP) into ophiobolin F. The C-terminal prenyltransferase (PT) domain of AcldOS converts isopentenyl diphosphate and dimethylallyl diphosphate into geranylfarnesyl diphosphate (GFPP), whereas the N-terminal terpene cyclase (TC) domain catalyzes the cyclization of GFPP to ophiobolin F. The protein is Ophiobolin F synthase of Aspergillus calidoustus.